The primary structure comprises 433 residues: 26S proteasome regulatory subunit 7 (433 aa).

The segment at 1-22 (MPDYLGADQRKTKEDEKDDKPI) is disordered. Residues 8 to 22 (DQRKTKEDEKDDKPI) are compositionally biased toward basic and acidic residues. K116 bears the N6-acetyllysine mark. 216–223 (GPPGTGKT) is an ATP binding site. An N6-acetyllysine modification is found at K422.

This sequence belongs to the AAA ATPase family. Component of the 19S proteasome regulatory particle complex. The 26S proteasome consists of a 20S core particle (CP) and two 19S regulatory subunits (RP). The regulatory particle is made of a lid composed of 9 subunits, a base containing 6 ATPases including PSMC2 and few additional components. Interacts with NDC80/HEC; this interaction is detected only during M phase. Interacts and SQSTM1. Interacts with PAAF1. Directly interacts with TRIM5. Post-translationally, monoubiquitinated by RNF181. Phosphorylated. Dephosphorylated by UBLCP1 which impairs PSMC2 ATPase activity and disrupts 26S proteasome assembly.

It is found in the cytoplasm. The protein localises to the nucleus. In terms of biological role, component of the 26S proteasome, a multiprotein complex involved in the ATP-dependent degradation of ubiquitinated proteins. This complex plays a key role in the maintenance of protein homeostasis by removing misfolded or damaged proteins, which could impair cellular functions, and by removing proteins whose functions are no longer required. Therefore, the proteasome participates in numerous cellular processes, including cell cycle progression, apoptosis, or DNA damage repair. PSMC2 belongs to the heterohexameric ring of AAA (ATPases associated with diverse cellular activities) proteins that unfolds ubiquitinated target proteins that are concurrently translocated into a proteolytic chamber and degraded into peptides. The polypeptide is 26S proteasome regulatory subunit 7 (PSMC2) (Bos taurus (Bovine)).